The chain runs to 226 residues: UPF0502 protein Gbem_0194 (226 aa).

Belongs to the UPF0502 family.

The polypeptide is UPF0502 protein Gbem_0194 (Citrifermentans bemidjiense (strain ATCC BAA-1014 / DSM 16622 / JCM 12645 / Bem) (Geobacter bemidjiensis)).